Reading from the N-terminus, the 730-residue chain is Catalase-peroxidase (730 aa).

Positions 92–225 (WHSAGTYRSI…LSAVHMGLIY (134 aa)) form a cross-link, tryptophyl-tyrosyl-methioninium (Trp-Tyr) (with M-251). The Proton acceptor role is filled by His93. The segment at residues 225–251 (YVNPEGPDGIPDPVASARDIRTTFRRM) is a cross-link (tryptophyl-tyrosyl-methioninium (Tyr-Met) (with W-92)). Position 266 (His266) interacts with heme b.

Belongs to the peroxidase family. Peroxidase/catalase subfamily. As to quaternary structure, homodimer or homotetramer. Heme b is required as a cofactor. In terms of processing, formation of the three residue Trp-Tyr-Met cross-link is important for the catalase, but not the peroxidase activity of the enzyme.

The protein localises to the cytoplasm. The catalysed reaction is H2O2 + AH2 = A + 2 H2O. It carries out the reaction 2 H2O2 = O2 + 2 H2O. Bifunctional enzyme with both catalase and broad-spectrum peroxidase activity. In Blumeria hordei (Barley powdery mildew), this protein is Catalase-peroxidase.